Consider the following 355-residue polypeptide: Gibberellin 3-beta-dioxygenase 4 (355 aa).

Residues 203 to 303 enclose the Fe2OG dioxygenase domain; the sequence is GRGAIRLNHY…RISIAYLWGG (101 aa). His227, Asp229, and His284 together coordinate Fe cation. The active site involves Arg294.

This sequence belongs to the iron/ascorbate-dependent oxidoreductase family. GA3OX subfamily. L-ascorbate is required as a cofactor. Requires Fe cation as cofactor. In terms of tissue distribution, expressed in siliques and in seeds, specifically at the rim of the embryo and the outer integument. Also expressed in flowers. Not detected in roots, stems and leaves.

It catalyses the reaction gibberellin A20 + 2-oxoglutarate + O2 = gibberellin A1 + succinate + CO2. The protein operates within plant hormone biosynthesis; gibberellin biosynthesis. In terms of biological role, converts the inactive gibberellin (GA) precursors GA9 and GA20 in the bioactives gibberellins GA4 and GA1. Involved in the production of bioactive GA for reproductive development. The chain is Gibberellin 3-beta-dioxygenase 4 from Arabidopsis thaliana (Mouse-ear cress).